Consider the following 179-residue polypeptide: MARHKLRIVAVGSTNPVKIEAVKEGFEKVLGAVEVIGVDVISGVSSHPIGLEETYLGALNRAKNAFEKVQCTYAVGIEAGLIKVGEHYIDIHICVVFDGVNETVGLSQGFEYPKIVAEKVLEGIEGGKIAEEISGIKDIGKNIGLIGYLTDNNITRKDLCRESVIMALIPRMIKNAHLY.

13 to 18 (STNPVK) contacts substrate. Gln70 is a binding site for Mg(2+).

Belongs to the YjjX NTPase family. As to quaternary structure, homodimer. Requires Mg(2+) as cofactor. The cofactor is Mn(2+).

It carries out the reaction XTP + H2O = XDP + phosphate + H(+). The enzyme catalyses ITP + H2O = IDP + phosphate + H(+). Phosphatase that hydrolyzes non-canonical purine nucleotides such as XTP and ITP to their respective diphosphate derivatives. Probably excludes non-canonical purines from DNA/RNA precursor pool, thus preventing their incorporation into DNA/RNA and avoiding chromosomal lesions. The sequence is that of Probable inosine/xanthosine triphosphatase from Methanocaldococcus jannaschii (strain ATCC 43067 / DSM 2661 / JAL-1 / JCM 10045 / NBRC 100440) (Methanococcus jannaschii).